Here is a 209-residue protein sequence, read N- to C-terminus: Glutathione S-transferase 1-1 (209 aa).

The GST N-terminal domain occupies 1–81; that stretch reads MADFYYLPGS…YLVEKYGKTD (81 aa). Glutathione-binding positions include serine 10, 51-53, and 65-67; these read HTI and ESR. Positions 87-209 constitute a GST C-terminal domain; it reads CPKKRAVINQ…GCLEFKKFFE (123 aa).

This sequence belongs to the GST superfamily. Theta family. As to quaternary structure, homodimer.

The enzyme catalyses RX + glutathione = an S-substituted glutathione + a halide anion + H(+). It catalyses the reaction 1,1,1-trichloro-2,2-bis(4-chlorophenyl)ethane = 1,1-dichloro-2,2-bis(4-chlorophenyl)ethylene + chloride + H(+). Its function is as follows. Conjugation of reduced glutathione to a wide number of exogenous and endogenous hydrophobic electrophiles. Has DDT dehydrochlorinase activity. The sequence is that of Glutathione S-transferase 1-1 (GstD1) from Drosophila sechellia (Fruit fly).